A 123-amino-acid chain; its full sequence is Small ribosomal subunit protein uS11 (123 aa).

It belongs to the universal ribosomal protein uS11 family. Part of the 30S ribosomal subunit. Interacts with proteins S7 and S18. Binds to IF-3.

In terms of biological role, located on the platform of the 30S subunit, it bridges several disparate RNA helices of the 16S rRNA. Forms part of the Shine-Dalgarno cleft in the 70S ribosome. In Coxiella burnetii (strain CbuG_Q212) (Coxiella burnetii (strain Q212)), this protein is Small ribosomal subunit protein uS11.